A 202-amino-acid chain; its full sequence is Thymidylate kinase (202 aa).

7–14 (GIDGSGKT) contributes to the ATP binding site.

The protein belongs to the thymidylate kinase family.

It catalyses the reaction dTMP + ATP = dTDP + ADP. Its function is as follows. Phosphorylation of dTMP to form dTDP in both de novo and salvage pathways of dTTP synthesis. This is Thymidylate kinase from Ehrlichia ruminantium (strain Gardel).